Here is a 130-residue protein sequence, read N- to C-terminus: Small ribosomal subunit protein uS11c (130 aa).

Belongs to the universal ribosomal protein uS11 family. As to quaternary structure, part of the 30S ribosomal subunit.

The protein resides in the plastid. It localises to the chloroplast. The polypeptide is Small ribosomal subunit protein uS11c (Porphyra purpurea (Red seaweed)).